Consider the following 382-residue polypeptide: Alkanesulfonate monooxygenase (382 aa).

The protein belongs to the SsuD family. Homotetramer.

The enzyme catalyses an alkanesulfonate + FMNH2 + O2 = an aldehyde + FMN + sulfite + H2O + 2 H(+). Catalyzes the desulfonation of aliphatic sulfonates. This is Alkanesulfonate monooxygenase from Yersinia pseudotuberculosis serotype O:1b (strain IP 31758).